Reading from the N-terminus, the 501-residue chain is Dynein regulatory complex subunit 5 (501 aa).

Residues 1–23 (MQDTVTTSALLDPSHSSVSTQDN) show a composition bias toward polar residues. 2 disordered regions span residues 1-56 (MQDT…HPRA) and 202-222 (LPAQ…EMEE). Residues 24-34 (SSTGGHTSSTS) are compositionally biased toward low complexity. LRR repeat units follow at residues 308 to 321 (VLEE…LIGD), 335 to 355 (RLRV…QSLA), 363 to 383 (NLIS…QALA), 391 to 411 (CLTT…TLLS), and 419 to 439 (TLTS…KQLL).

Belongs to the DRC5 family. As to quaternary structure, component of the nexin-dynein regulatory complex (N-DRC). Interacts with DRC1. Interacts with FBXL13/DRC6, DRC3 and DRC7.

The protein resides in the cell projection. The protein localises to the cilium. Its subcellular location is the flagellum. It is found in the cytoplasm. It localises to the cytoskeleton. The protein resides in the flagellum axoneme. In terms of biological role, component of the nexin-dynein regulatory complex (N-DRC) a key regulator of ciliary/flagellar motility which maintains the alignment and integrity of the distal axoneme and regulates microtubule sliding in motile axonemes. May play a role in the assembly of N-DRC. May be required for sperm motility. The protein is Dynein regulatory complex subunit 5 (TCTE1) of Homo sapiens (Human).